Here is a 146-residue protein sequence, read N- to C-terminus: 3-dehydroquinate dehydratase (146 aa).

The active-site Proton acceptor is the Y23. 3 residues coordinate substrate: N74, H80, and D87. H100 acts as the Proton donor in catalysis. Substrate-binding positions include 101-102 (IS) and R111.

This sequence belongs to the type-II 3-dehydroquinase family. In terms of assembly, homododecamer.

The catalysed reaction is 3-dehydroquinate = 3-dehydroshikimate + H2O. It participates in metabolic intermediate biosynthesis; chorismate biosynthesis; chorismate from D-erythrose 4-phosphate and phosphoenolpyruvate: step 3/7. In terms of biological role, catalyzes a trans-dehydration via an enolate intermediate. In Bacillus cytotoxicus (strain DSM 22905 / CIP 110041 / 391-98 / NVH 391-98), this protein is 3-dehydroquinate dehydratase.